A 537-amino-acid chain; its full sequence is CTP synthase (537 aa).

Positions 1 to 268 (MPFKCIFLTG…STFITEKLGL (268 aa)) are amidoligase domain. CTP is bound at residue S14. S14 provides a ligand contact to UTP. 15-20 (SLGKGL) is an ATP binding site. Residue Y55 participates in L-glutamine binding. ATP is bound at residue D72. Mg(2+) is bound by residues D72 and E142. Residues 149 to 151 (DIE), 188 to 193 (KTKPTQ), and K224 contribute to the CTP site. UTP contacts are provided by residues 188 to 193 (KTKPTQ) and K224. A Glutamine amidotransferase type-1 domain is found at 294–533 (RIGLVGKYVQ…IQAALLYSKN (240 aa)). Residue G353 coordinates L-glutamine. C380 acts as the Nucleophile; for glutamine hydrolysis in catalysis. L-glutamine contacts are provided by residues 381-384 (LGMQ), E404, and R461. Active-site residues include H506 and E508.

The protein belongs to the CTP synthase family. As to quaternary structure, homotetramer.

The enzyme catalyses UTP + L-glutamine + ATP + H2O = CTP + L-glutamate + ADP + phosphate + 2 H(+). It carries out the reaction L-glutamine + H2O = L-glutamate + NH4(+). The catalysed reaction is UTP + NH4(+) + ATP = CTP + ADP + phosphate + 2 H(+). The protein operates within pyrimidine metabolism; CTP biosynthesis via de novo pathway; CTP from UDP: step 2/2. Allosterically activated by GTP, when glutamine is the substrate; GTP has no effect on the reaction when ammonia is the substrate. The allosteric effector GTP functions by stabilizing the protein conformation that binds the tetrahedral intermediate(s) formed during glutamine hydrolysis. Inhibited by the product CTP, via allosteric rather than competitive inhibition. Functionally, catalyzes the ATP-dependent amination of UTP to CTP with either L-glutamine or ammonia as the source of nitrogen. Regulates intracellular CTP levels through interactions with the four ribonucleotide triphosphates. The sequence is that of CTP synthase from Chlamydia caviae (strain ATCC VR-813 / DSM 19441 / 03DC25 / GPIC) (Chlamydophila caviae).